Here is a 401-residue protein sequence, read N- to C-terminus: CCA-adding enzyme (401 aa).

Positions 32 and 35 each coordinate ATP. Residues Gly32 and Arg35 each coordinate CTP. Positions 45 and 47 each coordinate Mg(2+). Residues Arg116, Asp159, Arg162, Arg165, and Arg168 each contribute to the ATP site. 5 residues coordinate CTP: Arg116, Asp159, Arg162, Arg165, and Arg168.

It belongs to the tRNA nucleotidyltransferase/poly(A) polymerase family. Bacterial CCA-adding enzyme type 3 subfamily. Homodimer. Mg(2+) serves as cofactor.

The catalysed reaction is a tRNA precursor + 2 CTP + ATP = a tRNA with a 3' CCA end + 3 diphosphate. The enzyme catalyses a tRNA with a 3' CCA end + 2 CTP + ATP = a tRNA with a 3' CCACCA end + 3 diphosphate. Functionally, catalyzes the addition and repair of the essential 3'-terminal CCA sequence in tRNAs without using a nucleic acid template. Adds these three nucleotides in the order of C, C, and A to the tRNA nucleotide-73, using CTP and ATP as substrates and producing inorganic pyrophosphate. tRNA 3'-terminal CCA addition is required both for tRNA processing and repair. Also involved in tRNA surveillance by mediating tandem CCA addition to generate a CCACCA at the 3' terminus of unstable tRNAs. While stable tRNAs receive only 3'-terminal CCA, unstable tRNAs are marked with CCACCA and rapidly degraded. The protein is CCA-adding enzyme of Streptococcus mutans serotype c (strain ATCC 700610 / UA159).